The following is a 1273-amino-acid chain: DNA-directed RNA polymerase subunit beta (1273 aa).

Residues 1252–1273 (ADDQDLVVSSNDEEVSENDERS) are disordered.

Belongs to the RNA polymerase beta chain family. As to quaternary structure, the RNAP catalytic core consists of 2 alpha, 1 beta, 1 beta' and 1 omega subunit. When a sigma factor is associated with the core the holoenzyme is formed, which can initiate transcription.

The enzyme catalyses RNA(n) + a ribonucleoside 5'-triphosphate = RNA(n+1) + diphosphate. In terms of biological role, DNA-dependent RNA polymerase catalyzes the transcription of DNA into RNA using the four ribonucleoside triphosphates as substrates. The protein is DNA-directed RNA polymerase subunit beta of Dehalococcoides mccartyi (strain ATCC BAA-2100 / JCM 16839 / KCTC 5957 / BAV1).